The following is a 201-amino-acid chain: Small ribosomal subunit protein uS4c (201 aa).

The disordered stretch occupies residues 15-44 (LGALPGLTSKRPRSGSDLRNQSRSGKKSQY). Positions 89-150 (MRLDNILFRL…EQRSRALIQN (62 aa)) constitute an S4 RNA-binding domain.

The protein belongs to the universal ribosomal protein uS4 family. In terms of assembly, part of the 30S ribosomal subunit. Contacts protein S5. The interaction surface between S4 and S5 is involved in control of translational fidelity.

It is found in the plastid. It localises to the chloroplast. In terms of biological role, one of the primary rRNA binding proteins, it binds directly to 16S rRNA where it nucleates assembly of the body of the 30S subunit. With S5 and S12 plays an important role in translational accuracy. This chain is Small ribosomal subunit protein uS4c (rps4), found in Calycanthus floridus var. glaucus (Eastern sweetshrub).